We begin with the raw amino-acid sequence, 1935 residues long: Myosin-7 (1935 aa).

A Myosin N-terminal SH3-like domain is found at 32–81; it reads DLKKDVFVPDDKEEFVKATILSREGGKVTAETEHGKTVTVKEDQVLQQNP. The Myosin motor domain maps to 85-778; the sequence is DKIEDMAMLT…LLGLLEEMRD (694 aa). Lys129 is modified (N6,N6,N6-trimethyllysine). ATP is bound at residue 178–185; that stretch reads GESGAGKT. Thr378 bears the Phosphothreonine mark. Actin-binding stretches follow at residues 655-677 and 757-771; these read LNKL…IPNE and KFGH…GLLG. An IQ domain is found at 781–810; sequence LSRIITRIQAQSRGVLSRMEFKKLLERRDS. Residues 839–1935 adopt a coiled-coil conformation; it reads LLKSAETEKE…DIGTKGLNEE (1097 aa). Phosphoserine occurs at positions 1137 and 1269. Thr1282 carries the phosphothreonine modification. Tyr1308 carries the phosphotyrosine modification. Thr1309 carries the phosphothreonine modification. Phosphoserine is present on Ser1510. Phosphothreonine is present on Thr1513. Residues 1907–1935 form a disordered region; the sequence is EERADIAESQVNKLRAKSRDIGTKGLNEE. Residues 1923–1935 are compositionally biased toward basic and acidic residues; it reads KSRDIGTKGLNEE.

The protein belongs to the TRAFAC class myosin-kinesin ATPase superfamily. Myosin family. As to quaternary structure, muscle myosin is a hexameric protein that consists of 2 heavy chain subunits (MHC), 2 alkali light chain subunits (MLC) and 2 regulatory light chain subunits (MLC-2). Interacts with ECPAS. Interacts (via C-terminus) with LRRC39.

It localises to the cytoplasm. It is found in the myofibril. Its subcellular location is the sarcomere. In terms of biological role, myosins are actin-based motor molecules with ATPase activity essential for muscle contraction. Forms regular bipolar thick filaments that, together with actin thin filaments, constitute the fundamental contractile unit of skeletal and cardiac muscle. The chain is Myosin-7 (MYH7) from Bos taurus (Bovine).